The chain runs to 439 residues: Glycosyl hydrolase DigH (439 aa).

Positions 1–27 are cleaved as a signal peptide; sequence MDICSRNEKLAIRRPAILVALALLLCS. A lipid anchor (N-palmitoyl cysteine) is attached at C28. The S-diacylglycerol cysteine moiety is linked to residue C28. Residues 34 to 54 form a disordered region; the sequence is ESMVTPPAGSKPPATTQQSSQ.

This sequence belongs to the glycosyl hydrolase-like 10 (GHL10) family.

It is found in the cell outer membrane. Divisome-localized glycosyl hydrolase that cleaves peptide-free (denuded) peptidoglycans. This Escherichia coli O6:H1 (strain CFT073 / ATCC 700928 / UPEC) protein is Glycosyl hydrolase DigH.